Reading from the N-terminus, the 125-residue chain is Small ribosomal subunit protein bS6 (125 aa).

The disordered stretch occupies residues 96 to 125; the sequence is VTEASPMKAAKEERKPLAEVENNDFEDAEE. Positions 104–113 are enriched in basic and acidic residues; the sequence is AAKEERKPLA. The span at 116 to 125 shows a compositional bias: acidic residues; it reads ENNDFEDAEE.

The protein belongs to the bacterial ribosomal protein bS6 family.

Functionally, binds together with bS18 to 16S ribosomal RNA. The protein is Small ribosomal subunit protein bS6 of Haemophilus influenzae (strain 86-028NP).